The sequence spans 461 residues: uncharacterized protein (461 aa).

Residues 1 to 19 (MEKCSHESGRHSAENDGKY) show a composition bias toward basic and acidic residues. The disordered stretch occupies residues 1-21 (MEKCSHESGRHSAENDGKYDI).

This sequence belongs to the CapA family.

In terms of biological role, could be involved in the biosynthesis of a cell wall component. This is an uncharacterized protein from Sinorhizobium fredii (strain NBRC 101917 / NGR234).